Here is a 330-residue protein sequence, read N- to C-terminus: tRNA (guanine(37)-N(1))-methyltransferase Trm5b (330 aa).

Residues R173, 211-212, 238-239, and N252 each bind S-adenosyl-L-methionine; these read DI and DS.

This sequence belongs to the class I-like SAM-binding methyltransferase superfamily. TRM5/TYW2 family.

It is found in the cytoplasm. The enzyme catalyses guanosine(37) in tRNA + S-adenosyl-L-methionine = N(1)-methylguanosine(37) in tRNA + S-adenosyl-L-homocysteine + H(+). Specifically methylates the N1 position of guanosine-37 in various tRNAs. This chain is tRNA (guanine(37)-N(1))-methyltransferase Trm5b, found in Pyrococcus abyssi (strain GE5 / Orsay).